A 548-amino-acid polypeptide reads, in one-letter code: Chaperonin GroEL (548 aa).

ATP is bound by residues 30–33 (TLGP), Lys-51, 87–91 (DGTTT), Gly-415, 479–481 (NAA), and Asp-495.

It belongs to the chaperonin (HSP60) family. As to quaternary structure, forms a cylinder of 14 subunits composed of two heptameric rings stacked back-to-back. Interacts with the co-chaperonin GroES.

It localises to the cytoplasm. It catalyses the reaction ATP + H2O + a folded polypeptide = ADP + phosphate + an unfolded polypeptide.. In terms of biological role, together with its co-chaperonin GroES, plays an essential role in assisting protein folding. The GroEL-GroES system forms a nano-cage that allows encapsulation of the non-native substrate proteins and provides a physical environment optimized to promote and accelerate protein folding. In Lawsonia intracellularis (strain PHE/MN1-00), this protein is Chaperonin GroEL.